The chain runs to 1089 residues: Ankyrin repeat and IBR domain-containing protein 1 (1089 aa).

A lipid anchor (N-myristoyl glycine) is attached at G2. 2 ANK repeats span residues 45-74 (QHNT…NPNK) and 144-173 (KKNT…DLFA). The tract at residues 281–321 (CQRSGVQMPTPPPSGYNAWDTLPSPRTPRTTRSSVTSPDEI) is disordered. A compositionally biased stretch (low complexity) spans 303–318 (PSPRTPRTTRSSVTSP). The TRIAD supradomain stretch occupies residues 329 to 569 (DTSLCDICMC…GGYYRCTRYE (241 aa)). 14 residues coordinate Zn(2+): C333, C336, C351, H353, C356, C359, C378, C383, C465, C468, H473, C478, C519, and C522. An RING-type 1 zinc finger spans residues 333–383 (CDICMCSISVFEDPVDMPCGHDFCRGCWESFLNLKIQEGEAHNIFCPAYDC). The segment at 401–478 (DKRYLQFDIK…LGEAHEPCDC (78 aa)) adopts an IBR-type zinc-finger fold. An RING-type 2; atypical zinc finger spans residues 519-548 (CANCKSPIQKNEGCNHMQCAKCKYDFCWIC). C532 is an active-site residue. Zn(2+)-binding residues include C537, C540, C545, C548, H555, and C565. The stretch at 575-640 (EEQSKEMTVE…RALKETEGGC (66 aa)) forms a coiled coil. A Phosphoserine modification is found at S737. The interval 776 to 821 (RRGDVHSLLSNPPDPDEPSESTLDIPEGGSSSRRPGTSVVSSASMS) is disordered. The region spanning 851–870 (EDDPNILLAIQLSLQESGLA) is the UIM domain. Residues S884 and S911 each carry the phosphoserine modification. 3 disordered regions span residues 889 to 912 (GTSL…ALSS), 927 to 964 (AEND…QDPN), and 1026 to 1089 (DASV…VHLV). Polar residues-rich tracts occupy residues 931–941 (PFSTDTLSSHP) and 1070–1082 (DVSS…SSDW).

It belongs to the RBR family.

It catalyses the reaction [E2 ubiquitin-conjugating enzyme]-S-ubiquitinyl-L-cysteine + [acceptor protein]-L-lysine = [E2 ubiquitin-conjugating enzyme]-L-cysteine + [acceptor protein]-N(6)-ubiquitinyl-L-lysine.. Its function is as follows. Might act as an E3 ubiquitin-protein ligase, or as part of E3 complex, which accepts ubiquitin from specific E2 ubiquitin-conjugating enzymes and then transfers it to substrates. The polypeptide is Ankyrin repeat and IBR domain-containing protein 1 (ANKIB1) (Homo sapiens (Human)).